Reading from the N-terminus, the 361-residue chain is UDP-D-xylose:L-fucose alpha-1,3-D-xylosyltransferase 1 (361 aa).

Residues 1–21 are disordered; the sequence is MEQKQHILKQSTFSSSPSSYS. The Cytoplasmic segment spans residues 1-34; it reads MEQKQHILKQSTFSSSPSSYSSISDRPISLLSRN. The span at 11 to 21 shows a compositional bias: low complexity; it reads STFSSSPSSYS. Residues 35-55 traverse the membrane as a helical; Signal-anchor for type II membrane protein segment; sequence GLLLLLLALVLLLGVLLPWPG. The Lumenal segment spans residues 56 to 361; that stretch reads SPLFLFPNRL…ALESPLGKLE (306 aa). N-linked (GlcNAc...) asparagine glycosylation is found at Asn92 and Asn167. The DXD motif motif lies at 190-192; that stretch reads DVD. Asn222 and Asn286 each carry an N-linked (GlcNAc...) asparagine glycan.

Belongs to the glycosyltransferase 77 family. The cofactor is Mn(2+). Requires Mg(2+) as cofactor. Post-translationally, glycosylated. As to expression, expressed in roots, rosette leaves, cauline leaves and stems.

Its subcellular location is the golgi apparatus membrane. In terms of biological role, catalyzes the transfer of D-xylose from UDP-alpha-D-xylose onto L-fucose. Probably involved in the biosynthesis of rhamnogalacturonan II (RG-II) through xylosylation of the internal fucose moiety of the A-chain of RG-II, a structurally complex pectic polysaccharide of the primary cell wall. RG-II is essential for the cell wall integrity of rapidly growing tissues such as roots and pollen tube growth and elongation. The sequence is that of UDP-D-xylose:L-fucose alpha-1,3-D-xylosyltransferase 1 from Arabidopsis thaliana (Mouse-ear cress).